A 109-amino-acid polypeptide reads, in one-letter code: Mitochondrial pyruvate carrier 2 (109 aa).

The next 3 helical transmembrane spans lie at 19–35, 51–67, and 74–90; these read IHFW…IANI, IAVT…STII, and LFSV…YQLT.

The protein belongs to the mitochondrial pyruvate carrier (MPC) (TC 2.A.105) family.

It is found in the mitochondrion inner membrane. In terms of biological role, mediates the uptake of pyruvate into mitochondria. This chain is Mitochondrial pyruvate carrier 2, found in Arabidopsis thaliana (Mouse-ear cress).